Reading from the N-terminus, the 64-residue chain is UPF0434 protein BAB2_0345 (64 aa).

The protein belongs to the UPF0434 family.

This Brucella abortus (strain 2308) protein is UPF0434 protein BAB2_0345.